Consider the following 98-residue polypeptide: Small ribosomal subunit protein bS20 (98 aa).

Belongs to the bacterial ribosomal protein bS20 family.

Functionally, binds directly to 16S ribosomal RNA. In Synechococcus sp. (strain CC9902), this protein is Small ribosomal subunit protein bS20.